The primary structure comprises 341 residues: Methionine import ATP-binding protein MetN 3 (341 aa).

The ABC transporter domain maps to 2–241 (ILLENVKKIY…PKQDITKRFV (240 aa)). An ATP-binding site is contributed by 38 to 45 (GYSGAGKS).

The protein belongs to the ABC transporter superfamily. Methionine importer (TC 3.A.1.24) family. As to quaternary structure, the complex is composed of two ATP-binding proteins (MetN), two transmembrane proteins (MetI) and a solute-binding protein (MetQ).

The protein localises to the cell membrane. It catalyses the reaction L-methionine(out) + ATP + H2O = L-methionine(in) + ADP + phosphate + H(+). The enzyme catalyses D-methionine(out) + ATP + H2O = D-methionine(in) + ADP + phosphate + H(+). In terms of biological role, part of the ABC transporter complex MetNIQ involved in methionine import. Responsible for energy coupling to the transport system. The chain is Methionine import ATP-binding protein MetN 3 from Bacillus cereus (strain ATCC 14579 / DSM 31 / CCUG 7414 / JCM 2152 / NBRC 15305 / NCIMB 9373 / NCTC 2599 / NRRL B-3711).